The sequence spans 165 residues: MKCKTLLIACLFGLGSAQALAVSKLPPQIPVHAGSGRVTLDLRPLLAETNDVEITRVSVCRRVGSHCQETLWRIELPPGWRAGEIEVFGDYPGSSVLLRRPERLQPDGSYNAFIHFNERSRRHRQTVSSIAVEFCLAGEPGNWMLLDEATCLARRNAEERQGEKP.

Positions 1–21 are cleaved as a signal peptide; it reads MKCKTLLIACLFGLGSAQALA.

In terms of assembly, interacts with the Tle3 toxin.

Its subcellular location is the periplasm. Its function is as follows. Immunity protein that neutralizes the toxicity of the P.aeruginosa antibacterial toxin Tle3 in the periplasm to protect the cell from fratricide intoxication. The chain is Type VI lipase immunity protein Tli3 from Pseudomonas aeruginosa (strain ATCC 15692 / DSM 22644 / CIP 104116 / JCM 14847 / LMG 12228 / 1C / PRS 101 / PAO1).